Here is a 224-residue protein sequence, read N- to C-terminus: Transmembrane emp24 domain-containing protein 7 (224 aa).

Residues 1-34 form the signal peptide; it reads MPRPGSAQRWAAVAGRWGCRLLALLLLVPGPGGA. Residues 35–187 lie on the Lumenal side of the membrane; that stretch reads SEITFELPDN…RAEDLNTRVA (153 aa). In terms of domain architecture, GOLD spans 46–128; that stretch reads KQCFYEDIAQ…HKTVYFDFQV (83 aa). The N-linked (GlcNAc...) asparagine glycan is linked to Asn-103. A helical transmembrane segment spans residues 188-208; that stretch reads YWSVGEALILLVVSIGQVFLL. At 209 to 224 the chain is on the cytoplasmic side; it reads KSFFSDKRTTTTRVGS. A COPII vesicle coat-binding motif is present at residues 211 to 212; sequence FF. The COPI vesicle coat-binding motif lies at 211 to 224; the sequence is FFSDKRTTTTRVGS.

It belongs to the EMP24/GP25L family. Predominantly monomeric and to lesser extent homodimeric in endoplasmic reticulum, endoplasmic reticulum-Golgi intermediate compartment and cis-Golgi network. Oligomerizes with other members of the EMP24/GP25L family such as TMED2, TMED9 and TMED10. Interacts (via C-terminus) with COPG1; the interaction involves dimeric TMED7. Post-translationally, N-linked glycosylated in complex form containing terminal sialic acid.

The protein resides in the endoplasmic reticulum membrane. Its subcellular location is the golgi apparatus. It is found in the cis-Golgi network membrane. The protein localises to the endoplasmic reticulum-Golgi intermediate compartment membrane. It localises to the cytoplasmic vesicle. The protein resides in the COPI-coated vesicle membrane. Its subcellular location is the COPII-coated vesicle membrane. In terms of biological role, potential role in vesicular protein trafficking, mainly in the early secretory pathway. Appears to play a role in the biosynthesis of secreted cargo including processing and post-translational modifications. The sequence is that of Transmembrane emp24 domain-containing protein 7 (TMED7) from Homo sapiens (Human).